The following is an 80-amino-acid chain: RNA-binding protein Hfq (80 aa).

Residues 9–69 (DVFLNQVRKE…ISTILPITPI (61 aa)) enclose the Sm domain.

The protein belongs to the Hfq family. In terms of assembly, homohexamer.

Functionally, RNA chaperone that binds small regulatory RNA (sRNAs) and mRNAs to facilitate mRNA translational regulation in response to envelope stress, environmental stress and changes in metabolite concentrations. Also binds with high specificity to tRNAs. This Alkaliphilus metalliredigens (strain QYMF) protein is RNA-binding protein Hfq.